We begin with the raw amino-acid sequence, 281 residues long: Large ribosomal subunit protein uL2 (281 aa).

Positions 222–281 are disordered; sequence TVRGSVMNPNDHPHGGGEGRTPIGRKSPVTPWGKKALGVKTRNTKKPSEKLIVRKRNAKK.

Belongs to the universal ribosomal protein uL2 family. As to quaternary structure, part of the 50S ribosomal subunit. Forms a bridge to the 30S subunit in the 70S ribosome.

In terms of biological role, one of the primary rRNA binding proteins. Required for association of the 30S and 50S subunits to form the 70S ribosome, for tRNA binding and peptide bond formation. It has been suggested to have peptidyltransferase activity; this is somewhat controversial. Makes several contacts with the 16S rRNA in the 70S ribosome. The sequence is that of Large ribosomal subunit protein uL2 from Mesoplasma florum (strain ATCC 33453 / NBRC 100688 / NCTC 11704 / L1) (Acholeplasma florum).